A 383-amino-acid chain; its full sequence is L-lactate dehydrogenase (383 aa).

The FMN hydroxy acid dehydrogenase domain maps to 1-380; that stretch reads MIISSTFDYR…THESLASTDA (380 aa). Position 24 (tyrosine 24) interacts with substrate. Serine 106 and glutamine 127 together coordinate FMN. Tyrosine 129 contributes to the substrate binding site. Threonine 155 lines the FMN pocket. Residue arginine 164 participates in substrate binding. Lysine 251 lines the FMN pocket. The active-site Proton acceptor is histidine 275. Arginine 278 provides a ligand contact to substrate. Position 306–330 (306–330) interacts with FMN; it reads DSGVRSGLDVVRMIAQGADAVMIGR.

It belongs to the FMN-dependent alpha-hydroxy acid dehydrogenase family. FMN is required as a cofactor.

It localises to the cell inner membrane. It carries out the reaction (S)-lactate + A = pyruvate + AH2. In terms of biological role, catalyzes the conversion of L-lactate to pyruvate. Is coupled to the respiratory chain. The protein is L-lactate dehydrogenase of Bartonella quintana (strain Toulouse) (Rochalimaea quintana).